The sequence spans 345 residues: S-adenosylmethionine:tRNA ribosyltransferase-isomerase (345 aa).

Belongs to the QueA family. In terms of assembly, monomer.

The protein resides in the cytoplasm. It catalyses the reaction 7-aminomethyl-7-carbaguanosine(34) in tRNA + S-adenosyl-L-methionine = epoxyqueuosine(34) in tRNA + adenine + L-methionine + 2 H(+). It participates in tRNA modification; tRNA-queuosine biosynthesis. Transfers and isomerizes the ribose moiety from AdoMet to the 7-aminomethyl group of 7-deazaguanine (preQ1-tRNA) to give epoxyqueuosine (oQ-tRNA). This is S-adenosylmethionine:tRNA ribosyltransferase-isomerase from Acinetobacter baumannii (strain AB0057).